Reading from the N-terminus, the 700-residue chain is MKKLFVTCIVFFSILSPALLIAQQTGTAELIMKRVMLDLKKPLRNMDKVAEKNLNTLQPDGSWKDVPYKDDAMTNWLPNNHLLQLETIIQAYIEKDSHYYGDDKVFDQISKAFKYWYDSDPKSRNWWHNEIATPQALGEMLILMRYGKKPLDEALVHKLTERMKRGEPEKKTGANKTDIALHYFYRALLTSDEALLSFAVKELFYPVQFVHYEEGLQYDYSYLQHGPQLQISSYGAVFITGVLKLANYVRDTPYALSTEKLAIFSKYYRDSYLKAIRGSYMDFNVEGRGVSRPDILNKKAEKKRLLVAKMIDLKHTEEWADAIARTDSTVAAGYKIEPYHHQFWNGDYVQHLRPAYSFNVRMVSKRTRRSESGNKENLLGRYLSDGATNIQLRGPEYYNIMPVWEWDKIPGITSRDYLTDRPLTKLWGEQGSNDFAGGVSDGVYGASAYALDYDSLQAKKAWFFFDKEIVCLGAGINSNAPENITTTLNQSWLNGPVISTAGKTGRGKITTFKAQGQFWLLHDAIGYYFPEGANLSLSTQSQKGNWFHINNSHSKDEVSGDVFKLWINHGARPENAQYAYIVLPGINKPEEIKKYNGTAPKVLANTNQLQAVYHQQLDMVQAIFYTAGKLSVAGIEIETDKPCAVLIKHINGKQVIWAADPLQKEKTAVLSIRDLKTGKTNRVKIDFPQQEFAGATVELK.

A signal peptide spans 1-22 (MKKLFVTCIVFFSILSPALLIA). Residues H225, Y234, and R288 contribute to the active site. Residue S328 is glycosylated (O-linked (Man...) serine). 4 residues coordinate Ca(2+): E405, D407, D416, and Y417. S455 carries O-linked (Man...) serine glycosylation.

It belongs to the polysaccharide lyase 8 family. In terms of assembly, monomer. It depends on Ca(2+) as a cofactor.

The enzyme catalyses Eliminative degradation of polysaccharides containing 1,4-beta-D-hexosaminyl and 1,3-beta-D-glucuronosyl linkages to disaccharides containing 4-deoxy-beta-D-gluc-4-enuronosyl groups.. This Pedobacter heparinus (strain ATCC 13125 / DSM 2366 / CIP 104194 / JCM 7457 / NBRC 12017 / NCIMB 9290 / NRRL B-14731 / HIM 762-3) protein is Chondroitinase-AC (cslA).